Here is a 256-residue protein sequence, read N- to C-terminus: MNNIWWQTKGQGNVHLVLLHGWGLNAEVWRCIDEELSSHFTLHLVDLPGFGRSRGFGAMSLADMAEVVLRQAPDKAIWLGWSLGGLVASQIALTHPERVQAIVTVASSPCFSARDEWPGIKPDVLAGFQQQLSDDFQRTVERFLALQTMGTETARQDARALKKTVLALPMPKVDVLNGGLEILKTVDLRQPLQNVSMPFLRLYGYLDGLVPRKVVPMLDKLWPHSESYIFAKAAHAPFISHPDEFCHLLVALKQRV.

In terms of domain architecture, AB hydrolase-1 spans His15–Pro242. Residues Trp22, Ser82–Leu83, and Phe143–Gln147 contribute to the substrate site. The Nucleophile role is filled by Ser82. Active-site residues include Asp207 and His235. His235 is a binding site for substrate.

Belongs to the AB hydrolase superfamily. Carboxylesterase BioH family. As to quaternary structure, monomer.

It localises to the cytoplasm. The enzyme catalyses 6-carboxyhexanoyl-[ACP] methyl ester + H2O = 6-carboxyhexanoyl-[ACP] + methanol + H(+). The protein operates within cofactor biosynthesis; biotin biosynthesis. Its function is as follows. The physiological role of BioH is to remove the methyl group introduced by BioC when the pimeloyl moiety is complete. It allows to synthesize pimeloyl-ACP via the fatty acid synthetic pathway through the hydrolysis of the ester bonds of pimeloyl-ACP esters. The protein is Pimeloyl-[acyl-carrier protein] methyl ester esterase of Escherichia fergusonii (strain ATCC 35469 / DSM 13698 / CCUG 18766 / IAM 14443 / JCM 21226 / LMG 7866 / NBRC 102419 / NCTC 12128 / CDC 0568-73).